The primary structure comprises 409 residues: Tyrosine--tRNA ligase (409 aa).

An L-tyrosine-binding site is contributed by Tyr35. The short motif at 40–49 is the 'HIGH' region element; it reads PTGSSLHVGH. L-tyrosine is bound by residues Tyr168 and Gln172. The 'KMSKS' region signature appears at 228-232; that stretch reads KMGKT. ATP is bound at residue Lys231. Positions 339–404 constitute an S4 RNA-binding domain; the sequence is IKVTDLFVQV…AGKKRVVRIV (66 aa).

It belongs to the class-I aminoacyl-tRNA synthetase family. TyrS type 1 subfamily. In terms of assembly, homodimer.

It localises to the cytoplasm. It carries out the reaction tRNA(Tyr) + L-tyrosine + ATP = L-tyrosyl-tRNA(Tyr) + AMP + diphosphate + H(+). Functionally, catalyzes the attachment of tyrosine to tRNA(Tyr) in a two-step reaction: tyrosine is first activated by ATP to form Tyr-AMP and then transferred to the acceptor end of tRNA(Tyr). This chain is Tyrosine--tRNA ligase, found in Treponema pallidum (strain Nichols).